The following is a 114-amino-acid chain: Photosystem II reaction center Psb28 protein (114 aa).

Belongs to the Psb28 family. Part of the photosystem II complex.

Its subcellular location is the plastid. The protein resides in the chloroplast thylakoid membrane. The sequence is that of Photosystem II reaction center Psb28 protein from Gracilaria tenuistipitata var. liui (Red alga).